We begin with the raw amino-acid sequence, 285 residues long: Nurim (285 aa).

The Nuclear segment spans residues Met1–Ser16. A helical membrane pass occupies residues Leu17 to Phe44. Residues Leu45–Gln74 are Perinuclear space-facing. The chain crosses the membrane as a helical span at residues Phe75–Met96. Over Ala97–Gln113 the chain is Nuclear. The helical transmembrane segment at Arg114–Arg130 threads the bilayer. Topologically, residues Phe131–Trp149 are perinuclear space. Residues Ser150–Leu180 form a helical membrane-spanning segment. Over Met181–Leu207 the chain is Nuclear. The chain crosses the membrane as a helical span at residues Tyr208–Val226. The Perinuclear space segment spans residues Pro227–Asp232. The chain crosses the membrane as a helical span at residues Arg233–Leu250. The Nuclear segment spans residues Asp251 to Asn285.

It belongs to the nurim family.

The protein resides in the nucleus inner membrane. This is Nurim (nrm) from Xenopus laevis (African clawed frog).